The primary structure comprises 87 residues: Phosphoribosyl-ATP pyrophosphatase (87 aa).

Belongs to the PRA-PH family.

The protein localises to the cytoplasm. It catalyses the reaction 1-(5-phospho-beta-D-ribosyl)-ATP + H2O = 1-(5-phospho-beta-D-ribosyl)-5'-AMP + diphosphate + H(+). Its pathway is amino-acid biosynthesis; L-histidine biosynthesis; L-histidine from 5-phospho-alpha-D-ribose 1-diphosphate: step 2/9. This Saccharopolyspora erythraea (strain ATCC 11635 / DSM 40517 / JCM 4748 / NBRC 13426 / NCIMB 8594 / NRRL 2338) protein is Phosphoribosyl-ATP pyrophosphatase.